Consider the following 454-residue polypeptide: UDP-N-acetylmuramate--L-alanine ligase (454 aa).

113 to 119 serves as a coordination point for ATP; the sequence is GSHGKTT.

It belongs to the MurCDEF family.

It localises to the cytoplasm. It catalyses the reaction UDP-N-acetyl-alpha-D-muramate + L-alanine + ATP = UDP-N-acetyl-alpha-D-muramoyl-L-alanine + ADP + phosphate + H(+). Its pathway is cell wall biogenesis; peptidoglycan biosynthesis. Its function is as follows. Cell wall formation. This Sulfurihydrogenibium sp. (strain YO3AOP1) protein is UDP-N-acetylmuramate--L-alanine ligase.